The primary structure comprises 347 residues: Phenylalanine--tRNA ligase alpha subunit (347 aa).

Glu-265 serves as a coordination point for Mg(2+).

Belongs to the class-II aminoacyl-tRNA synthetase family. Phe-tRNA synthetase alpha subunit type 1 subfamily. Tetramer of two alpha and two beta subunits. The cofactor is Mg(2+).

Its subcellular location is the cytoplasm. It carries out the reaction tRNA(Phe) + L-phenylalanine + ATP = L-phenylalanyl-tRNA(Phe) + AMP + diphosphate + H(+). The protein is Phenylalanine--tRNA ligase alpha subunit of Wolbachia sp. subsp. Brugia malayi (strain TRS).